A 147-amino-acid polypeptide reads, in one-letter code: Large ribosomal subunit protein uL15 (147 aa).

A compositionally biased stretch (basic residues) spans 1-28 (MIRRRKKVRKLRGSHTHGWGCKKKHRGG). Residues 1 to 43 (MIRRRKKVRKLRGSHTHGWGCKKKHRGGGSKGGRGMAGTGKRN) form a disordered region. Over residues 29–38 (GSKGGRGMAG) the composition is skewed to gly residues.

It belongs to the universal ribosomal protein uL15 family. As to quaternary structure, part of the 50S ribosomal subunit.

Functionally, binds to the 23S rRNA. This Pyrococcus abyssi (strain GE5 / Orsay) protein is Large ribosomal subunit protein uL15.